A 230-amino-acid polypeptide reads, in one-letter code: Cytidylate kinase (230 aa).

Position 12–20 (glycine 12–threonine 20) interacts with ATP.

Belongs to the cytidylate kinase family. Type 1 subfamily.

Its subcellular location is the cytoplasm. The catalysed reaction is CMP + ATP = CDP + ADP. It carries out the reaction dCMP + ATP = dCDP + ADP. The chain is Cytidylate kinase from Shewanella sp. (strain W3-18-1).